The following is a 266-amino-acid chain: Type III pantothenate kinase (266 aa).

ATP is bound at residue 6 to 13 (DIGNSRIK). Substrate is bound by residues Tyr94 and 101 to 104 (GIDR). The active-site Proton acceptor is the Asp103. A K(+)-binding site is contributed by Asp128. ATP is bound at residue Thr131. Position 183 (Thr183) interacts with substrate.

This sequence belongs to the type III pantothenate kinase family. As to quaternary structure, homodimer. NH4(+) is required as a cofactor. It depends on K(+) as a cofactor.

It is found in the cytoplasm. The enzyme catalyses (R)-pantothenate + ATP = (R)-4'-phosphopantothenate + ADP + H(+). It participates in cofactor biosynthesis; coenzyme A biosynthesis; CoA from (R)-pantothenate: step 1/5. Functionally, catalyzes the phosphorylation of pantothenate (Pan), the first step in CoA biosynthesis. This Nitrosococcus oceani (strain ATCC 19707 / BCRC 17464 / JCM 30415 / NCIMB 11848 / C-107) protein is Type III pantothenate kinase.